A 127-amino-acid chain; its full sequence is Aspartate 1-decarboxylase (127 aa).

Residue Ser25 is the Schiff-base intermediate with substrate; via pyruvic acid of the active site. Ser25 is subject to Pyruvic acid (Ser). Thr57 provides a ligand contact to substrate. Tyr58 acts as the Proton donor in catalysis. Position 73-75 (73-75 (GAA)) interacts with substrate.

This sequence belongs to the PanD family. As to quaternary structure, heterooctamer of four alpha and four beta subunits. It depends on pyruvate as a cofactor. In terms of processing, is synthesized initially as an inactive proenzyme, which is activated by self-cleavage at a specific serine bond to produce a beta-subunit with a hydroxyl group at its C-terminus and an alpha-subunit with a pyruvoyl group at its N-terminus.

It localises to the cytoplasm. The enzyme catalyses L-aspartate + H(+) = beta-alanine + CO2. Its pathway is cofactor biosynthesis; (R)-pantothenate biosynthesis; beta-alanine from L-aspartate: step 1/1. Functionally, catalyzes the pyruvoyl-dependent decarboxylation of aspartate to produce beta-alanine. This Clostridium botulinum (strain Okra / Type B1) protein is Aspartate 1-decarboxylase.